The sequence spans 72 residues: DNA-directed RNA polymerase subunit omega (72 aa).

It belongs to the RNA polymerase subunit omega family. The RNAP catalytic core consists of 2 alpha, 1 beta, 1 beta' and 1 omega subunit. When a sigma factor is associated with the core the holoenzyme is formed, which can initiate transcription.

It carries out the reaction RNA(n) + a ribonucleoside 5'-triphosphate = RNA(n+1) + diphosphate. Functionally, promotes RNA polymerase assembly. Latches the N- and C-terminal regions of the beta' subunit thereby facilitating its interaction with the beta and alpha subunits. This Clostridium beijerinckii (strain ATCC 51743 / NCIMB 8052) (Clostridium acetobutylicum) protein is DNA-directed RNA polymerase subunit omega.